A 606-amino-acid chain; its full sequence is Granule-bound starch synthase 1, chloroplastic/amyloplastic (606 aa).

Residues 1 to 76 constitute a chloroplast transit peptide; sequence MSALTTSQLA…GSRRFPSVVV (76 aa). The segment at 29-67 is disordered; the sequence is RHGFQGLKPRSPAGGDASSLSVTTSARATPKQQRSVQRG. Residues 46–66 show a composition bias toward polar residues; sequence SSLSVTTSARATPKQQRSVQR. Lys-97 is an ADP-alpha-D-glucose binding site.

It belongs to the glycosyltransferase 1 family. Bacterial/plant glycogen synthase subfamily.

Its subcellular location is the plastid. The protein resides in the chloroplast. It is found in the amyloplast. The enzyme catalyses an NDP-alpha-D-glucose + [(1-&gt;4)-alpha-D-glucosyl](n) = [(1-&gt;4)-alpha-D-glucosyl](n+1) + a ribonucleoside 5'-diphosphate + H(+). The protein operates within glycan biosynthesis; starch biosynthesis. Functionally, required for the synthesis of amylose in endosperm. The chain is Granule-bound starch synthase 1, chloroplastic/amyloplastic (WAXY) from Oryza sativa (Rice).